A 180-amino-acid chain; its full sequence is NAD(P)H-quinone oxidoreductase subunit I, chloroplastic (180 aa).

2 4Fe-4S ferredoxin-type domains span residues 55–84 (GRIH…VDWK) and 95–124 (LNYS…MTEE). [4Fe-4S] cluster is bound by residues C64, C67, C70, C74, C104, C107, C110, and C114.

This sequence belongs to the complex I 23 kDa subunit family. In terms of assembly, NDH is composed of at least 16 different subunits, 5 of which are encoded in the nucleus. The cofactor is [4Fe-4S] cluster.

Its subcellular location is the plastid. It is found in the chloroplast thylakoid membrane. The enzyme catalyses a plastoquinone + NADH + (n+1) H(+)(in) = a plastoquinol + NAD(+) + n H(+)(out). The catalysed reaction is a plastoquinone + NADPH + (n+1) H(+)(in) = a plastoquinol + NADP(+) + n H(+)(out). In terms of biological role, NDH shuttles electrons from NAD(P)H:plastoquinone, via FMN and iron-sulfur (Fe-S) centers, to quinones in the photosynthetic chain and possibly in a chloroplast respiratory chain. The immediate electron acceptor for the enzyme in this species is believed to be plastoquinone. Couples the redox reaction to proton translocation, and thus conserves the redox energy in a proton gradient. This Sorghum bicolor (Sorghum) protein is NAD(P)H-quinone oxidoreductase subunit I, chloroplastic.